Consider the following 559-residue polypeptide: Beta-glucuronidase (559 aa).

The first 19 residues, Met1–Ala19, serve as a signal peptide directing secretion. N-linked (GlcNAc...) asparagine glycans are attached at residues Asn53, Asn91, Asn99, and Asn143. Glu194 serves as the catalytic Proton donor. 3 N-linked (GlcNAc...) asparagine glycosylation sites follow: Asn203, Asn222, and Asn280. Residue Glu312 is the Nucleophile of the active site. Residues Asn427, Asn440, Asn465, Asn491, and Asn520 are each glycosylated (N-linked (GlcNAc...) asparagine).

It belongs to the glycosyl hydrolase 79 family.

It localises to the secreted. The enzyme catalyses a beta-D-glucuronoside + H2O = D-glucuronate + an alcohol. Beta-glucuronidase that hydrolyzes beta-glucuronosyl and 4-O-methyl-beta-glucuronosyl residues of arabinogalactan-protein. Hydrolyzed heparan sulfate only very weakly. Has no activity on xylan from birchwood. Able to catalyze the transglycosylation of glucuronic acid (GlcA) residues from p-nitrophenyl-beta-glucuronic acid (PNP beta-GlcA) to various monosaccharide acceptors such as glucose, galactose and xylose. The protein is Beta-glucuronidase of Neurospora crassa (strain ATCC 24698 / 74-OR23-1A / CBS 708.71 / DSM 1257 / FGSC 987).